Consider the following 340-residue polypeptide: Ketol-acid reductoisomerase (NADP(+)) (340 aa).

The region spanning 3 to 183 is the KARI N-terminal Rossmann domain; sequence LSVYYDKDCN…GGGRTGIIET (181 aa). NADP(+)-binding positions include 26–29, Ser-54, and 84–87; these read FGSQ and DELQ. The active site involves His-109. Gly-135 is an NADP(+) binding site. The region spanning 184–329 is the KARI C-terminal knotted domain; it reads TFKDETETDL…ERLRAMMPWI (146 aa). Asp-192, Glu-196, Glu-228, and Glu-232 together coordinate Mg(2+). Ser-253 is a substrate binding site.

Belongs to the ketol-acid reductoisomerase family. Mg(2+) serves as cofactor.

The enzyme catalyses (2R)-2,3-dihydroxy-3-methylbutanoate + NADP(+) = (2S)-2-acetolactate + NADPH + H(+). The catalysed reaction is (2R,3R)-2,3-dihydroxy-3-methylpentanoate + NADP(+) = (S)-2-ethyl-2-hydroxy-3-oxobutanoate + NADPH + H(+). The protein operates within amino-acid biosynthesis; L-isoleucine biosynthesis; L-isoleucine from 2-oxobutanoate: step 2/4. Its pathway is amino-acid biosynthesis; L-valine biosynthesis; L-valine from pyruvate: step 2/4. Functionally, involved in the biosynthesis of branched-chain amino acids (BCAA). Catalyzes an alkyl-migration followed by a ketol-acid reduction of (S)-2-acetolactate (S2AL) to yield (R)-2,3-dihydroxy-isovalerate. In the isomerase reaction, S2AL is rearranged via a Mg-dependent methyl migration to produce 3-hydroxy-3-methyl-2-ketobutyrate (HMKB). In the reductase reaction, this 2-ketoacid undergoes a metal-dependent reduction by NADPH to yield (R)-2,3-dihydroxy-isovalerate. The chain is Ketol-acid reductoisomerase (NADP(+)) from Wolinella succinogenes (strain ATCC 29543 / DSM 1740 / CCUG 13145 / JCM 31913 / LMG 7466 / NCTC 11488 / FDC 602W) (Vibrio succinogenes).